The sequence spans 230 residues: Heptaprenylglyceryl phosphate synthase (230 aa).

A sn-glycerol 1-phosphate-binding site is contributed by Lys-12. The Mg(2+) site is built by Asp-14 and Thr-40. Sn-glycerol 1-phosphate is bound by residues 159–164, Gly-189, and 209–210; these read YVEYSG and GD.

It belongs to the GGGP/HepGP synthase family. Group I subfamily. As to quaternary structure, homodimer. Requires Mg(2+) as cofactor.

The catalysed reaction is sn-glycerol 1-phosphate + all-trans-heptaprenyl diphosphate = 3-heptaprenyl-sn-glycero-1-phosphate + diphosphate. It participates in membrane lipid metabolism; glycerophospholipid metabolism. Functionally, prenyltransferase that catalyzes in vivo the transfer of the heptaprenyl moiety of heptaprenyl pyrophosphate (HepPP; 35 carbon atoms) to the C3 hydroxyl of sn-glycerol-1-phosphate (G1P), producing heptaprenylglyceryl phosphate (HepGP). This reaction is an ether-bond-formation step in the biosynthesis of archaea-type G1P-based membrane lipids found in Bacillales. This Staphylococcus epidermidis (strain ATCC 35984 / DSM 28319 / BCRC 17069 / CCUG 31568 / BM 3577 / RP62A) protein is Heptaprenylglyceryl phosphate synthase.